A 317-amino-acid polypeptide reads, in one-letter code: Heme A synthase (317 aa).

Residues 1–6 (MQRSLK) lie on the Cytoplasmic side of the membrane. Residues 7–27 (WFASTTTVAMLFVLIGGALVT) form a helical membrane-spanning segment. Residues 28 to 54 (KTDSGMGCGRSWPLCHGQWIPDDITPQ) are Extracellular-facing. The cysteines at positions 35 and 42 are disulfide-linked. The chain crosses the membrane as a helical span at residues 55–75 (LVIELSHRLVSGLAAIMVLIL). The active site involves E58. Residue H61 coordinates heme o. The Cytoplasmic portion of the chain corresponds to 76–91 (CIRSWRVMGHVRETKP). Residues 92–112 (LAVLSFVFLVLQSLIGAAAVV) traverse the membrane as a helical segment. The Extracellular portion of the chain corresponds to 113–123 (WGQSDFVMALH). Residue H123 coordinates heme o. A helical membrane pass occupies residues 124–144 (FGISLISFAAVLLLTLLIFVV). Residues 145–159 (DKKFSPTSLQLDGQM) lie on the Cytoplasmic side of the membrane. Residues 160–180 (RFHIYGIIIYSYLVVYTGALV) traverse the membrane as a helical segment. Topologically, residues 181-214 (RHTNASLACPSWPLCAKSRLLPVQFHEWVQMGHR) are extracellular. Residues C189 and C195 are joined by a disulfide bond. H213 lines the heme b pocket. Residues 215–235 (LAAAVIIIWIAVATVHAARYY) traverse the membrane as a helical segment. At 236 to 243 (REQPVIYY) the chain is on the cytoplasmic side. Residues 244–264 (GWIISLLLVLAQMVTGALVVF) traverse the membrane as a helical segment. Residues 265–272 (TELNLYIS) are Extracellular-facing. A helical transmembrane segment spans residues 273 to 293 (LAHAFFISCLFGVLSYLLLLA). H275 is a binding site for heme b. Residues 294 to 317 (LRTRRRPATAAGRSVEDTASAPLK) are Cytoplasmic-facing.

The protein belongs to the COX15/CtaA family. Type 1 subfamily. As to quaternary structure, interacts with CtaB. Heme b serves as cofactor.

It is found in the cell membrane. The catalysed reaction is Fe(II)-heme o + 2 A + H2O = Fe(II)-heme a + 2 AH2. The protein operates within porphyrin-containing compound metabolism; heme A biosynthesis; heme A from heme O: step 1/1. Catalyzes the conversion of heme O to heme A by two successive hydroxylations of the methyl group at C8. The first hydroxylation forms heme I, the second hydroxylation results in an unstable dihydroxymethyl group, which spontaneously dehydrates, resulting in the formyl group of heme A. In Geobacillus thermodenitrificans, this protein is Heme A synthase.